The chain runs to 433 residues: 3-phosphoshikimate 1-carboxyvinyltransferase (433 aa).

Residues Lys21, Ser22, and Arg26 each contribute to the 3-phosphoshikimate site. Lys21 contacts phosphoenolpyruvate. Phosphoenolpyruvate contacts are provided by Gly92 and Arg120. The 3-phosphoshikimate site is built by Ser166, Gln168, Asp317, and Lys344. Gln168 contributes to the phosphoenolpyruvate binding site. Catalysis depends on Asp317, which acts as the Proton acceptor. Phosphoenolpyruvate contacts are provided by Arg348 and Arg391.

Belongs to the EPSP synthase family. Monomer.

The protein resides in the cytoplasm. It carries out the reaction 3-phosphoshikimate + phosphoenolpyruvate = 5-O-(1-carboxyvinyl)-3-phosphoshikimate + phosphate. Its pathway is metabolic intermediate biosynthesis; chorismate biosynthesis; chorismate from D-erythrose 4-phosphate and phosphoenolpyruvate: step 6/7. In terms of biological role, catalyzes the transfer of the enolpyruvyl moiety of phosphoenolpyruvate (PEP) to the 5-hydroxyl of shikimate-3-phosphate (S3P) to produce enolpyruvyl shikimate-3-phosphate and inorganic phosphate. In Caldicellulosiruptor bescii (strain ATCC BAA-1888 / DSM 6725 / KCTC 15123 / Z-1320) (Anaerocellum thermophilum), this protein is 3-phosphoshikimate 1-carboxyvinyltransferase.